A 520-amino-acid chain; its full sequence is Chaperone Ric-8B (520 aa).

Residue S468 is modified to Phosphoserine. At T473 the chain carries Phosphothreonine.

It belongs to the synembryn family. In terms of assembly, interacts with GDP-bound G(s) G-alpha proteins GNAL and GNAS. Does not interact with G-alpha proteins when they are in complex with subunits beta and gamma.

Its subcellular location is the cytoplasm. The protein resides in the cell cortex. Functionally, chaperone that specifically binds and folds nascent G(s) G-alpha proteins (GNAS and GNAL) prior to G protein heterotrimer formation, promoting their association with the plasma membrane. Also acts as a guanine nucleotide exchange factor (GEF) for G(s) proteins by stimulating exchange of bound GDP for free GTP. Acts as an important component for odorant signal transduction by mediating GNAL (G(olf)-alpha) folding, thereby promoting-dependent cAMP accumulation in olfactory sensory neurons. The chain is Chaperone Ric-8B (Ric8b) from Rattus norvegicus (Rat).